A 346-amino-acid chain; its full sequence is Methionine import ATP-binding protein MetN 1 (346 aa).

The 240-residue stretch at 2-241 (IELKNVSKVF…PQHVTTKKFV (240 aa)) folds into the ABC transporter domain. 38–45 (GYSGAGKS) contributes to the ATP binding site.

Belongs to the ABC transporter superfamily. Methionine importer (TC 3.A.1.24) family. As to quaternary structure, the complex is composed of two ATP-binding proteins (MetN), two transmembrane proteins (MetI) and a solute-binding protein (MetQ).

The protein localises to the cell membrane. The enzyme catalyses L-methionine(out) + ATP + H2O = L-methionine(in) + ADP + phosphate + H(+). It catalyses the reaction D-methionine(out) + ATP + H2O = D-methionine(in) + ADP + phosphate + H(+). Functionally, part of the ABC transporter complex MetNIQ involved in methionine import. Responsible for energy coupling to the transport system. This Bacillus cereus (strain ZK / E33L) protein is Methionine import ATP-binding protein MetN 1.